A 1659-amino-acid chain; its full sequence is Daxx-like protein (1659 aa).

Disordered regions lie at residues 1-25 (MSASVICVDLSSESDEESPAKRRRL) and 265-336 (QLQQ…VRSL). Residues 438-469 (LGQLQQEQQKILGQLQQQKQQQQQQQKKILGQ) adopt a coiled-coil conformation. 3 stretches are compositionally biased toward low complexity: residues 506–520 (SVGQLQQQQPHQSQQ), 528–542 (KQQPQQQKKISVGQF), and 600–625 (GQLQRQTQQQQKTSAGQFQQQPQQQQ). Disordered regions lie at residues 506–542 (SVGQLQQQQPHQSQQKNSMVHVKQQPQQQKKISVGQF), 600–645 (GQLQ…TLAG), 658–713 (SAGQ…MPQK), 872–894 (TLPFRSSQRKTSEAPMTSTHVQG), 924–952 (LPPTTSITPQLTPTTTPPPAGPSAAVQQQ), 1023–1060 (VESPPTTPPTDKPEPERGPMTVEKSSIKPMATDKQSRA), and 1536–1555 (FKIADDGDDSEEESDSEDDD). Positions 626–635 (KISAGQLQEH) are enriched in polar residues. 2 stretches are compositionally biased toward low complexity: residues 636 to 645 (SQQQQKTLAG) and 658 to 698 (SAGQ…QPQQ). 2 stretches are compositionally biased toward polar residues: residues 699–711 (RTSAGLLQQQQMP) and 885–894 (APMTSTHVQG). A necessary for interaction with His3.3A and His3.3B region spans residues 870–1659 (ARTLPFRSSQ…DQIIISDEES (790 aa)). The span at 924–937 (LPPTTSITPQLTPT) shows a compositional bias: low complexity. Over residues 1541-1555 (DGDDSEEESDSEDDD) the composition is skewed to acidic residues.

As to quaternary structure, interacts with p53 (via C-terminus). Interacts (via C-terminus) with His3.3A and His3.3B. Interacts with asf1. As to expression, ubiquitously expressed with higher levels in the head (at protein level). Expressed in the germ line, with prominent expression in primary spermatocytes and meiotic spermatocytes (at protein level). In ovaries, expressed in nurse cells and in the germinal vesicle of the ovarian follicle at stage 10 (at protein level).

It localises to the cytoplasm. Its subcellular location is the cytosol. The protein localises to the nucleus. It is found in the chromosome. Its function is as follows. Transcription regulator. Acts as a histone chaperone that facilitates deposition of histone H3.3. Has a role in chromatin remodeling together with asf1 and XNP. Has role in the transcriptional apoptotic response to oxidative and UV stress. The chain is Daxx-like protein from Drosophila melanogaster (Fruit fly).